The chain runs to 114 residues: Nucleoid-associated protein Cyan7425_0899 (114 aa).

Belongs to the YbaB/EbfC family. As to quaternary structure, homodimer.

Its subcellular location is the cytoplasm. It is found in the nucleoid. In terms of biological role, binds to DNA and alters its conformation. May be involved in regulation of gene expression, nucleoid organization and DNA protection. The polypeptide is Nucleoid-associated protein Cyan7425_0899 (Cyanothece sp. (strain PCC 7425 / ATCC 29141)).